We begin with the raw amino-acid sequence, 686 residues long: DNA ligase 2 (686 aa).

Residues 37 to 41 (DDEYD), 86 to 87 (SL), and Glu121 each bind NAD(+). Residue Lys123 is the N6-AMP-lysine intermediate of the active site. 4 residues coordinate NAD(+): Arg144, Glu179, Lys295, and Lys319. Zn(2+)-binding residues include Cys413, Cys416, Cys431, and Cys436. Residues 593 to 681 (VRGEQLAGLN…GVQLPGVQAS (89 aa)) enclose the BRCT domain.

It belongs to the NAD-dependent DNA ligase family. LigA subfamily. Requires Mg(2+) as cofactor. The cofactor is Mn(2+).

The enzyme catalyses NAD(+) + (deoxyribonucleotide)n-3'-hydroxyl + 5'-phospho-(deoxyribonucleotide)m = (deoxyribonucleotide)n+m + AMP + beta-nicotinamide D-nucleotide.. Functionally, DNA ligase that catalyzes the formation of phosphodiester linkages between 5'-phosphoryl and 3'-hydroxyl groups in double-stranded DNA using NAD as a coenzyme and as the energy source for the reaction. It is essential for DNA replication and repair of damaged DNA. This is DNA ligase 2 from Deinococcus deserti (strain DSM 17065 / CIP 109153 / LMG 22923 / VCD115).